The primary structure comprises 223 residues: Phosphoribosylformylglycinamidine synthase subunit PurQ (223 aa).

The region spanning 3-223 is the Glutamine amidotransferase type-1 domain; it reads SAVVQLPGLN…FASALDVIAA (221 aa). Cys86 functions as the Nucleophile in the catalytic mechanism. Catalysis depends on residues His196 and Glu198.

As to quaternary structure, part of the FGAM synthase complex composed of 1 PurL, 1 PurQ and 2 PurS subunits.

Its subcellular location is the cytoplasm. It carries out the reaction N(2)-formyl-N(1)-(5-phospho-beta-D-ribosyl)glycinamide + L-glutamine + ATP + H2O = 2-formamido-N(1)-(5-O-phospho-beta-D-ribosyl)acetamidine + L-glutamate + ADP + phosphate + H(+). The enzyme catalyses L-glutamine + H2O = L-glutamate + NH4(+). The protein operates within purine metabolism; IMP biosynthesis via de novo pathway; 5-amino-1-(5-phospho-D-ribosyl)imidazole from N(2)-formyl-N(1)-(5-phospho-D-ribosyl)glycinamide: step 1/2. Functionally, part of the phosphoribosylformylglycinamidine synthase complex involved in the purines biosynthetic pathway. Catalyzes the ATP-dependent conversion of formylglycinamide ribonucleotide (FGAR) and glutamine to yield formylglycinamidine ribonucleotide (FGAM) and glutamate. The FGAM synthase complex is composed of three subunits. PurQ produces an ammonia molecule by converting glutamine to glutamate. PurL transfers the ammonia molecule to FGAR to form FGAM in an ATP-dependent manner. PurS interacts with PurQ and PurL and is thought to assist in the transfer of the ammonia molecule from PurQ to PurL. This Rhizobium meliloti (strain 1021) (Ensifer meliloti) protein is Phosphoribosylformylglycinamidine synthase subunit PurQ.